The primary structure comprises 234 residues: Cytochrome b (234 aa).

The next 4 helical transmembrane spans lie at 33–53 (FGSL…FLAM), 77–98 (WLIR…YMHV), 113–133 (WNIG…GYVL), and 178–198 (FFAF…IHLL). Residues His83 and His97 each contribute to the heme b site. Residues His182 and His196 each coordinate heme b. Residue His201 coordinates a ubiquinone. The chain crosses the membrane as a helical span at residues 226–234 (IKDLLGFLV).

Belongs to the cytochrome b family. The cytochrome bc1 complex contains 11 subunits: 3 respiratory subunits (MT-CYB, CYC1 and UQCRFS1), 2 core proteins (UQCRC1 and UQCRC2) and 6 low-molecular weight proteins (UQCRH/QCR6, UQCRB/QCR7, UQCRQ/QCR8, UQCR10/QCR9, UQCR11/QCR10 and a cleavage product of UQCRFS1). This cytochrome bc1 complex then forms a dimer. Requires heme b as cofactor.

The protein resides in the mitochondrion inner membrane. In terms of biological role, component of the ubiquinol-cytochrome c reductase complex (complex III or cytochrome b-c1 complex) that is part of the mitochondrial respiratory chain. The b-c1 complex mediates electron transfer from ubiquinol to cytochrome c. Contributes to the generation of a proton gradient across the mitochondrial membrane that is then used for ATP synthesis. This Lepus arcticus (Arctic hare) protein is Cytochrome b (MT-CYB).